Consider the following 334-residue polypeptide: Probable fructose-bisphosphate aldolase class 1 (334 aa).

This sequence belongs to the class I fructose-bisphosphate aldolase family.

The enzyme catalyses beta-D-fructose 1,6-bisphosphate = D-glyceraldehyde 3-phosphate + dihydroxyacetone phosphate. Its pathway is carbohydrate degradation; glycolysis; D-glyceraldehyde 3-phosphate and glycerone phosphate from D-glucose: step 4/4. The polypeptide is Probable fructose-bisphosphate aldolase class 1 (Xylella fastidiosa (strain 9a5c)).